A 61-amino-acid chain; its full sequence is Small ribosomal subunit protein uS14 (61 aa).

Residues Cys-24, Cys-27, Cys-40, and Cys-43 each coordinate Zn(2+).

It belongs to the universal ribosomal protein uS14 family. Zinc-binding uS14 subfamily. Part of the 30S ribosomal subunit. Contacts proteins S3 and S10. The cofactor is Zn(2+).

Binds 16S rRNA, required for the assembly of 30S particles and may also be responsible for determining the conformation of the 16S rRNA at the A site. In Thermobifida fusca (strain YX), this protein is Small ribosomal subunit protein uS14.